A 136-amino-acid chain; its full sequence is Sec-independent protein translocase protein TatB (136 aa).

The helical transmembrane segment at 2–22 (FGSVGWGELLVLLIVGLVVLG) threads the bilayer. Residues 107 to 136 (VTEPAPTPIVNPELAKPAEPGPTRYDADAT) are disordered.

The protein belongs to the TatB family. As to quaternary structure, the Tat system comprises two distinct complexes: a TatABC complex, containing multiple copies of TatA, TatB and TatC subunits, and a separate TatA complex, containing only TatA subunits. Substrates initially bind to the TatABC complex, which probably triggers association of the separate TatA complex to form the active translocon.

It localises to the cell membrane. Functionally, part of the twin-arginine translocation (Tat) system that transports large folded proteins containing a characteristic twin-arginine motif in their signal peptide across membranes. Together with TatC, TatB is part of a receptor directly interacting with Tat signal peptides. TatB may form an oligomeric binding site that transiently accommodates folded Tat precursor proteins before their translocation. The chain is Sec-independent protein translocase protein TatB from Mycobacteroides abscessus (strain ATCC 19977 / DSM 44196 / CCUG 20993 / CIP 104536 / JCM 13569 / NCTC 13031 / TMC 1543 / L948) (Mycobacterium abscessus).